The following is a 439-amino-acid chain: GTPase Obg (439 aa).

Residues 5–164 (TDFFDQATIV…LTLELELKML (160 aa)) form the Obg domain. Positions 165 to 335 (ADVGLVGFPN…LLRRVADLLR (171 aa)) constitute an OBG-type G domain. Residues 171-178 (GFPNAGKS), 196-200 (FTTLT), 217-220 (DIPG), 287-290 (NKAD), and 316-318 (SAA) each bind GTP. Mg(2+)-binding residues include Ser-178 and Thr-198. The OCT domain occupies 356–433 (LPEVDENAFT…IGRAELVWDD (78 aa)).

It belongs to the TRAFAC class OBG-HflX-like GTPase superfamily. OBG GTPase family. In terms of assembly, monomer. Requires Mg(2+) as cofactor.

Its subcellular location is the cytoplasm. Functionally, an essential GTPase which binds GTP, GDP and possibly (p)ppGpp with moderate affinity, with high nucleotide exchange rates and a fairly low GTP hydrolysis rate. Plays a role in control of the cell cycle, stress response, ribosome biogenesis and in those bacteria that undergo differentiation, in morphogenesis control. The sequence is that of GTPase Obg from Chloroflexus aurantiacus (strain ATCC 29364 / DSM 637 / Y-400-fl).